Consider the following 240-residue polypeptide: ANSVCFTFTDFESGQQDLIFQGDASVGSNKALQLTKVDSKGNPQGGSVGRALYTAPIRLWQSSSLVASFETTFTFSISQGSSTPAAALTFFIASPDTKIPSGSGGRLLGLFGSSNNAGSDNGVVAVEFDTYPNTDIGDPNYRHIGIDVNSIRSKAASKWDWQNGKTATAHISYNSASKRLSVVSSYPNSSPVVVSFDVELNNVGPPDVRVGFSATTGQYTQTNNILAWSFRSSLMGYQAN.

E127 and D129 together coordinate Mn(2+). 4 residues coordinate Ca(2+): D129, Y131, N133, and D138. Mn(2+)-binding residues include D138 and H143.

The protein belongs to the leguminous lectin family. Heterotetramer of two alpha and two beta chains; disulfide bond linked.

Its function is as follows. Binds preferentially to oligosaccharides bearing the sequence Man-alpha-1-&gt;2 Man-alpha-1-&gt;6 Man-alpha-1-&gt;6Man found in early steps of glycoprotein processing in the endoplasmic reticulum. It binds weakly to highly processed oligosaccharide structures. The chain is Lectin from Leucomphalos mildbraedii (Bowringia mildbraedii).